The chain runs to 229 residues: Large ribosomal subunit protein uL1 (229 aa).

Belongs to the universal ribosomal protein uL1 family. Part of the 50S ribosomal subunit.

Binds directly to 23S rRNA. The L1 stalk is quite mobile in the ribosome, and is involved in E site tRNA release. Functionally, protein L1 is also a translational repressor protein, it controls the translation of the L11 operon by binding to its mRNA. The polypeptide is Large ribosomal subunit protein uL1 (Streptococcus pneumoniae (strain ATCC 700669 / Spain 23F-1)).